The chain runs to 159 residues: Transcription antitermination protein NusB (159 aa).

The protein belongs to the NusB family.

Functionally, involved in transcription antitermination. Required for transcription of ribosomal RNA (rRNA) genes. Binds specifically to the boxA antiterminator sequence of the ribosomal RNA (rrn) operons. The chain is Transcription antitermination protein NusB from Stenotrophomonas maltophilia (strain K279a).